The sequence spans 427 residues: 3-isopropylmalate dehydratase large subunit (427 aa).

Residues Cys-308, Cys-368, and Cys-371 each coordinate [4Fe-4S] cluster.

This sequence belongs to the aconitase/IPM isomerase family. LeuC type 2 subfamily. Heterodimer of LeuC and LeuD. [4Fe-4S] cluster is required as a cofactor.

The catalysed reaction is (2R,3S)-3-isopropylmalate = (2S)-2-isopropylmalate. The protein operates within amino-acid biosynthesis; L-leucine biosynthesis; L-leucine from 3-methyl-2-oxobutanoate: step 2/4. Functionally, catalyzes the isomerization between 2-isopropylmalate and 3-isopropylmalate, via the formation of 2-isopropylmaleate. This chain is 3-isopropylmalate dehydratase large subunit, found in Geobacter metallireducens (strain ATCC 53774 / DSM 7210 / GS-15).